Reading from the N-terminus, the 224-residue chain is Phosphoribosylformylglycinamidine synthase subunit PurQ (224 aa).

Residues 4 to 224 (RIGVITFPGT…YSALDSVLAS (221 aa)) enclose the Glutamine amidotransferase type-1 domain. Cysteine 87 (nucleophile) is an active-site residue. Residues histidine 195 and glutamate 197 contribute to the active site.

Part of the FGAM synthase complex composed of 1 PurL, 1 PurQ and 2 PurS subunits.

The protein resides in the cytoplasm. It carries out the reaction N(2)-formyl-N(1)-(5-phospho-beta-D-ribosyl)glycinamide + L-glutamine + ATP + H2O = 2-formamido-N(1)-(5-O-phospho-beta-D-ribosyl)acetamidine + L-glutamate + ADP + phosphate + H(+). The enzyme catalyses L-glutamine + H2O = L-glutamate + NH4(+). It participates in purine metabolism; IMP biosynthesis via de novo pathway; 5-amino-1-(5-phospho-D-ribosyl)imidazole from N(2)-formyl-N(1)-(5-phospho-D-ribosyl)glycinamide: step 1/2. In terms of biological role, part of the phosphoribosylformylglycinamidine synthase complex involved in the purines biosynthetic pathway. Catalyzes the ATP-dependent conversion of formylglycinamide ribonucleotide (FGAR) and glutamine to yield formylglycinamidine ribonucleotide (FGAM) and glutamate. The FGAM synthase complex is composed of three subunits. PurQ produces an ammonia molecule by converting glutamine to glutamate. PurL transfers the ammonia molecule to FGAR to form FGAM in an ATP-dependent manner. PurS interacts with PurQ and PurL and is thought to assist in the transfer of the ammonia molecule from PurQ to PurL. This is Phosphoribosylformylglycinamidine synthase subunit PurQ from Mycobacterium leprae (strain TN).